Reading from the N-terminus, the 382-residue chain is Opsin Rh3 (382 aa).

At 1-56 (MEYHNVSSVLGNVSSVLRPDARLSAESRLLGWNVPPDELRHIPEHWLIYPEPPESM) the chain is on the extracellular side. Asn12 is a glycosylation site (N-linked (GlcNAc...) asparagine). Residues 57–81 (NYLLGTLYIFFTVISMIGNGLVMWV) form a helical membrane-spanning segment. The Cytoplasmic segment spans residues 82–93 (FSAAKSLRTPSN). The helical transmembrane segment at 94–118 (ILVINLAFCDFMMMIKTPIFIYNSF) threads the bilayer. Residues 119–132 (HQGYALGHLGCQIF) are Extracellular-facing. Cysteines 129 and 206 form a disulfide. A helical transmembrane segment spans residues 133–152 (GVIGSYTGIAAGATNAFIAY). Topologically, residues 153–170 (DRYNVITRPMEGKMTHGK) are cytoplasmic. The helical transmembrane segment at 171–195 (AIAMIIFIYLYATPWVVACYTESWG) threads the bilayer. Residues 196 to 219 (RFVPEGYLTSCTFDYLTDNFDTRL) lie on the Extracellular side of the membrane. The chain crosses the membrane as a helical span at residues 220-247 (FVACIFFFSFVCPTTMITYYYSQIVGHV). The Cytoplasmic segment spans residues 248-283 (FSHEKALRDQAKKMNVDSLRSNVDKSKEAAEIRIAK). Residues 284 to 307 (AAITICFLFFASWTPYGVMSLIGA) form a helical membrane-spanning segment. Over 308-315 (FGDKTLLT) the chain is Extracellular. A helical membrane pass occupies residues 316–340 (PGATMIPACTCKMVACIDPFVYAIS). Lys327 is modified (N6-(retinylidene)lysine). Topologically, residues 341-382 (HPRYRMELQKRCPWLAISEKAPESAAAISTSTTQEQQQTTAA) are cytoplasmic.

This sequence belongs to the G-protein coupled receptor 1 family. Opsin subfamily. Post-translationally, phosphorylated on some or all of the serine and threonine residues present in the C-terminal region.

Its subcellular location is the membrane. Visual pigments are the light-absorbing molecules that mediate vision. They consist of an apoprotein, opsin, covalently linked to cis-retinal. This Drosophila pseudoobscura pseudoobscura (Fruit fly) protein is Opsin Rh3 (Rh3).